Here is a 152-residue protein sequence, read N- to C-terminus: D-aminoacyl-tRNA deacylase (152 aa).

The Gly-cisPro motif, important for rejection of L-amino acids motif lies at glycine 142–proline 143.

The protein belongs to the DTD family. Homodimer.

Its subcellular location is the cytoplasm. It carries out the reaction glycyl-tRNA(Ala) + H2O = tRNA(Ala) + glycine + H(+). It catalyses the reaction a D-aminoacyl-tRNA + H2O = a tRNA + a D-alpha-amino acid + H(+). Its function is as follows. An aminoacyl-tRNA editing enzyme that deacylates mischarged D-aminoacyl-tRNAs. Also deacylates mischarged glycyl-tRNA(Ala), protecting cells against glycine mischarging by AlaRS. Acts via tRNA-based rather than protein-based catalysis; rejects L-amino acids rather than detecting D-amino acids in the active site. By recycling D-aminoacyl-tRNA to D-amino acids and free tRNA molecules, this enzyme counteracts the toxicity associated with the formation of D-aminoacyl-tRNA entities in vivo and helps enforce protein L-homochirality. This Burkholderia cenocepacia (strain ATCC BAA-245 / DSM 16553 / LMG 16656 / NCTC 13227 / J2315 / CF5610) (Burkholderia cepacia (strain J2315)) protein is D-aminoacyl-tRNA deacylase.